A 274-amino-acid chain; its full sequence is Large ribosomal subunit protein uL2cz/uL2cy (274 aa).

2 disordered regions span residues 1–25 (MAIH…VKSN) and 223–274 (MNPV…RRTK).

It belongs to the universal ribosomal protein uL2 family. In terms of assembly, part of the 50S ribosomal subunit.

The protein resides in the plastid. The protein localises to the chloroplast. The protein is Large ribosomal subunit protein uL2cz/uL2cy (rpl2-A) of Citrus sinensis (Sweet orange).